The chain runs to 2839 residues: Bifunctional DNA-directed RNA polymerase subunit beta-beta' (2839 aa).

Residues 1-1433 form a DNA-directed RNA polymerase subunit beta region; the sequence is MVDSSYMCAS…CLNVALKQNN (1433 aa). The segment at 1436-2839 is DNA-directed RNA polymerase subunit beta'; it reads IEDISHTNIA…KESVAESRYN (1404 aa). Cysteine 1501, cysteine 1503, cysteine 1516, and cysteine 1519 together coordinate Zn(2+). The Mg(2+) site is built by aspartate 1893, aspartate 1895, and aspartate 1897. Cysteine 2238, cysteine 2312, cysteine 2319, and cysteine 2322 together coordinate Zn(2+).

It in the N-terminal section; belongs to the RNA polymerase beta chain family. The protein in the C-terminal section; belongs to the RNA polymerase beta' chain family. As to quaternary structure, the RNAP catalytic core consists of 2 alpha, 1 beta/beta' and 1 omega subunit. When a sigma factor is associated with the core the holoenzyme is formed, which can initiate transcription. It depends on Mg(2+) as a cofactor. Zn(2+) is required as a cofactor.

The enzyme catalyses RNA(n) + a ribonucleoside 5'-triphosphate = RNA(n+1) + diphosphate. In terms of biological role, DNA-dependent RNA polymerase catalyzes the transcription of DNA into RNA using the four ribonucleoside triphosphates as substrates. The protein is Bifunctional DNA-directed RNA polymerase subunit beta-beta' (rpoBC) of Wolbachia sp. subsp. Brugia malayi (strain TRS).